Reading from the N-terminus, the 178-residue chain is DELTA-miturgitoxin-Cp3a (178 aa).

The signal sequence occupies residues 1–18; the sequence is MKALYLLGLLAFLYSCSS. Positions 19–46 are excised as a propeptide; that stretch reads ENVYDLQPESSEEENPGTFLEAIQEQSR. The Processing quadruplet motif motif lies at 43-46; that stretch reads EQSR. Disulfide bonds link Cys48-Cys63, Cys55-Cys72, Cys62-Cys86, Cys74-Cys84, Cys113-Cys128, Cys120-Cys137, Cys127-Cys155, and Cys139-Cys153.

Belongs to the spider toxin CSTX family. Double-CSTX subfamily. In terms of processing, cleavage of the propeptide depends on the processing quadruplet motif (XXXR, with at least one of X being E). Expressed by the venom gland.

The protein localises to the secreted. Spider venom toxin that exhibits cytolytic activity by forming an alpha-helix across the membrane. Lethal to insect larvae. The chain is DELTA-miturgitoxin-Cp3a from Cheiracanthium punctorium (Yellow sac spider).